Reading from the N-terminus, the 211-residue chain is Uracil phosphoribosyltransferase (211 aa).

Residues Arg-79, Arg-104, and 131 to 139 contribute to the 5-phospho-alpha-D-ribose 1-diphosphate site; that span reads DPMLATGGS. Residues Ile-196 and 201–203 contribute to the uracil site; that span reads GDA. 5-phospho-alpha-D-ribose 1-diphosphate is bound at residue Asp-202.

Belongs to the UPRTase family. Requires Mg(2+) as cofactor.

It carries out the reaction UMP + diphosphate = 5-phospho-alpha-D-ribose 1-diphosphate + uracil. It functions in the pathway pyrimidine metabolism; UMP biosynthesis via salvage pathway; UMP from uracil: step 1/1. Its activity is regulated as follows. Allosterically activated by GTP. Functionally, catalyzes the conversion of uracil and 5-phospho-alpha-D-ribose 1-diphosphate (PRPP) to UMP and diphosphate. This is Uracil phosphoribosyltransferase from Limosilactobacillus reuteri (strain DSM 20016) (Lactobacillus reuteri).